Here is a 99-residue protein sequence, read N- to C-terminus: PE-PGRS family protein PE25 (99 aa).

Positions 1-92 constitute a PE domain; sequence MSFVITNPEA…GADKYATAEA (92 aa). Ser-2 is subject to N-acetylserine.

Belongs to the mycobacterial PE family. Forms a heterodimer with PPE41. The dimer forms a 1:1:1 heterotrimeric complex with EspG5. Interacts with PPE51.

It is found in the secreted. Functionally, the PE25/PPE41 dimer induces both a strong humoral and cellular immune response. PE25 protein alone induces low response. The dimer induces necrosis, but not apoptosis, in mouse macrophage cells. It also induces activation and maturation of mouse dendritic cells and drives Th2-biased immune responses. This Mycobacterium tuberculosis (strain ATCC 25618 / H37Rv) protein is PE-PGRS family protein PE25.